Here is a 129-residue protein sequence, read N- to C-terminus: D-ribose pyranase (129 aa).

The active-site Proton donor is histidine 20. Residues aspartate 28, histidine 96, and 118 to 120 (YAN) each bind substrate.

The protein belongs to the RbsD / FucU family. RbsD subfamily. Homodecamer.

The protein resides in the cytoplasm. The enzyme catalyses beta-D-ribopyranose = beta-D-ribofuranose. It participates in carbohydrate metabolism; D-ribose degradation; D-ribose 5-phosphate from beta-D-ribopyranose: step 1/2. Catalyzes the interconversion of beta-pyran and beta-furan forms of D-ribose. In Staphylococcus saprophyticus subsp. saprophyticus (strain ATCC 15305 / DSM 20229 / NCIMB 8711 / NCTC 7292 / S-41), this protein is D-ribose pyranase.